The following is a 470-amino-acid chain: Siroheme synthase (470 aa).

The precorrin-2 dehydrogenase /sirohydrochlorin ferrochelatase stretch occupies residues 1–203; sequence MDYLPIFVEL…GQIQQAEKQL (203 aa). Residues 22–23 and 43–44 contribute to the NAD(+) site; these read EV and PE. A Phosphoserine modification is found at Ser128. The interval 214–470 is uroporphyrinogen-III C-methyltransferase; the sequence is GELALVGAGP…ISRPAVVDFA (257 aa). Pro223 contributes to the S-adenosyl-L-methionine binding site. Asp246 acts as the Proton acceptor in catalysis. Lys268 acts as the Proton donor in catalysis. Residues 299–301, Ile304, 329–330, Met381, and Gly410 contribute to the S-adenosyl-L-methionine site; these read GGD and TA.

In the N-terminal section; belongs to the precorrin-2 dehydrogenase / sirohydrochlorin ferrochelatase family. The protein in the C-terminal section; belongs to the precorrin methyltransferase family.

The enzyme catalyses uroporphyrinogen III + 2 S-adenosyl-L-methionine = precorrin-2 + 2 S-adenosyl-L-homocysteine + H(+). It carries out the reaction precorrin-2 + NAD(+) = sirohydrochlorin + NADH + 2 H(+). The catalysed reaction is siroheme + 2 H(+) = sirohydrochlorin + Fe(2+). The protein operates within cofactor biosynthesis; adenosylcobalamin biosynthesis; precorrin-2 from uroporphyrinogen III: step 1/1. Its pathway is cofactor biosynthesis; adenosylcobalamin biosynthesis; sirohydrochlorin from precorrin-2: step 1/1. It participates in porphyrin-containing compound metabolism; siroheme biosynthesis; precorrin-2 from uroporphyrinogen III: step 1/1. It functions in the pathway porphyrin-containing compound metabolism; siroheme biosynthesis; siroheme from sirohydrochlorin: step 1/1. The protein operates within porphyrin-containing compound metabolism; siroheme biosynthesis; sirohydrochlorin from precorrin-2: step 1/1. Multifunctional enzyme that catalyzes the SAM-dependent methylations of uroporphyrinogen III at position C-2 and C-7 to form precorrin-2 via precorrin-1. Then it catalyzes the NAD-dependent ring dehydrogenation of precorrin-2 to yield sirohydrochlorin. Finally, it catalyzes the ferrochelation of sirohydrochlorin to yield siroheme. The sequence is that of Siroheme synthase from Photorhabdus laumondii subsp. laumondii (strain DSM 15139 / CIP 105565 / TT01) (Photorhabdus luminescens subsp. laumondii).